The primary structure comprises 696 residues: MSTQSPNHHEDITKTSSVNMTTTTTTTKTKAAAKAGTNAAPKQKTQMHRRSRTGCYTCRLRRKKCDEGSPMCTACKHLGLCCEYKRPMWWSNNDARRKQKDEIKMIIKRKKLSEKSSHTIQTSINTPPGLSHSLPTSATFSDPLDRNRSASIDSHFGFNFNSPQHGQDFAAFATPQIHVNGEYMFPPFSPYEIDMKTERQIFINDIPTLRESTVSTFSTYQTPPPPGTILPSFPLEGEWTEQVFSERRESLTEETFNANFFDFACDPAMASSQVAIELDDGDQKLLDHFVQHVLPTIFPILESNQHGSISSELVLPSLANNKGYLHCCLSIAAQHFKSTMGIQNEEIDNDIMRHRYATITWLCEALNRDENHQPILDATLGLIFFQCIVGRPEDTLPDIPWHQHFQAVVSLVQKLDLAGLVSDITKPLAHTPFNMTLTSWIDILGATMLGSSPLFAHTYRNKHLSINNHSLGLRELMGCEDRVMYLISEIACLESLKNQGMDDITLCQHVRGLGDEISNTEVNEGTLVEPYNANGTLSPKQLSKNITAAFRLAARIYLCSLVPGFYPAQPSCMGLVEKLTAVLQLIPSGVNGYDRSLTWVYLIGGSVSVPGSSFRDFFENRVAQLGDVANSGSFGRMTVLLREVWLQYEAILAAAEAAAGTSSLSSETPQQQQQVNAHYVRWREVMQIKGWDYLLI.

The disordered stretch occupies residues 1–48 (MSTQSPNHHEDITKTSSVNMTTTTTTTKTKAAAKAGTNAAPKQKTQMH). Residues 21–40 (TTTTTTTKTKAAAKAGTNAA) show a composition bias toward low complexity. Positions 55–82 (CYTCRLRRKKCDEGSPMCTACKHLGLCC) form a DNA-binding region, zn(2)-C6 fungal-type. The disordered stretch occupies residues 112–145 (LSEKSSHTIQTSINTPPGLSHSLPTSATFSDPLD). Polar residues predominate over residues 118 to 140 (HTIQTSINTPPGLSHSLPTSATF).

The protein resides in the nucleus. In terms of biological role, may be involved in fruiting body development. This is Transcriptional regulatory protein pro1 (adv-1) from Neurospora crassa (strain ATCC 24698 / 74-OR23-1A / CBS 708.71 / DSM 1257 / FGSC 987).